Reading from the N-terminus, the 225-residue chain is Thaumatin-like protein (225 aa).

The first 24 residues, 1–24, serve as a signal peptide directing secretion; the sequence is MSTFKSLSLSALLFIAFLFTCARG. 8 disulfides stabilise this stretch: Cys33/Cys224, Cys74/Cys84, Cys89/Cys95, Cys140/Cys213, Cys146/Cys196, Cys154/Cys164, Cys168/Cys177, and Cys178/Cys183. Residue Asn187 is glycosylated (N-linked (GlcNAc...) asparagine).

Belongs to the thaumatin family. Post-translationally, N-glycosylated. As to expression, woody stem plug.

The protein localises to the secreted. Has antifungal activity. The polypeptide is Thaumatin-like protein (tlp) (Actinidia deliciosa (Kiwi)).